The sequence spans 428 residues: MVHRTEPPDGGWGWMVVLSAFFQSALVFGVLRSFGVFFVEFVAAFEEQAARVSWIASIGIAVQQFGSPIGSALSTKLGPRPVVMTGGILAALGMLLASFATSLTHLYLSIGLLSGSGWALTFTPTLACLSRYFSQRRSLAMGLALTGVGISSFAFAPLFQWLLNNYAWRGALLLVSALSLHLVACGALLRPLSLTEDTAVGGPWAQITSLLCHGPFLRYTVALTLINTGYFIPYVHLVAHLQDLGWDPLPAAFLLSVAAISDLVGRVASGWLGDAVPGPVARLLMLWTTLTGVSLALFPVAQASTTLVVLAVAYGFTSGALTPVAFSVIPELVGTGRIYCGLGLVQMIESVGGLLGAPLSGYLRDVTGNYTASFVVAGAFLLAGSGVLITLPHFFSCISLSTSRPQDLVIEAPDTKIPLPKEEGLGEN.

At Met-1–Gly-10 the chain is on the cytoplasmic side. 12 helical membrane passes run Gly-11–Leu-31, Val-52–Ala-72, Pro-81–Thr-101, Leu-106–Leu-126, Leu-139–Phe-159, Leu-172–Leu-192, Val-221–Leu-241, Leu-244–Val-264, Leu-283–Ala-303, Val-309–Ile-329, Ile-338–Pro-358, and Phe-374–Phe-394. At Phe-395 to Asn-428 the chain is on the cytoplasmic side.

The protein belongs to the major facilitator superfamily. Monocarboxylate porter (TC 2.A.1.13) family.

Its subcellular location is the golgi apparatus membrane. The protein localises to the cell membrane. Functionally, proton-linked monocarboxylate transporter. May catalyze the transport of monocarboxylates across the plasma membrane. The sequence is that of Monocarboxylate transporter 13 (Slc16a13) from Rattus norvegicus (Rat).